The sequence spans 141 residues: uncharacterized protein (141 aa).

This is an uncharacterized protein from Methanocaldococcus jannaschii (strain ATCC 43067 / DSM 2661 / JAL-1 / JCM 10045 / NBRC 100440) (Methanococcus jannaschii).